The following is a 216-amino-acid chain: GTP cyclohydrolase 1 (216 aa).

Residues Cys-108, His-111, and Cys-179 each coordinate Zn(2+).

The protein belongs to the GTP cyclohydrolase I family. As to quaternary structure, toroid-shaped homodecamer, composed of two pentamers of five dimers.

The catalysed reaction is GTP + H2O = 7,8-dihydroneopterin 3'-triphosphate + formate + H(+). It participates in cofactor biosynthesis; 7,8-dihydroneopterin triphosphate biosynthesis; 7,8-dihydroneopterin triphosphate from GTP: step 1/1. The chain is GTP cyclohydrolase 1 from Shewanella oneidensis (strain ATCC 700550 / JCM 31522 / CIP 106686 / LMG 19005 / NCIMB 14063 / MR-1).